We begin with the raw amino-acid sequence, 403 residues long: MIPLLFILFYFANGIEWHKFETSEEIISTYLLDDVLYTGVNGAVYTFSNNKLNKTGLTNNNYITTSIKVEDADKDTLVCGTNNGNPKCWKIDGSDDPKHRGRGYAPYQNSKVTIISYNECVLSDINISKEGIKRWRRFDGPCGYDLYTADNVIPKDGLRGAFVDKDGTYDKVYILFTDTIGSKRIVKIPYIAQMCLNDEGGPSSLSSHRWSTFLKVELECDIDGRSYRQIIHSRTIKTDNDTILYVFFDSPYSKSALCTYSMNTIKQSFSTSKLEGYTKQLPSPAPGICLPAGKVVSHTTFEVIEKYNVLDDIIKPLSNQPIFEGPSGVKWFDIKEKENEHREYRIYFIKENSIYSFDTKSKQTRSSQVDARLFSVMVTSKPLFIADIGIGVGMPQMKKILKM.

The signal sequence occupies residues 1–14 (MIPLLFILFYFANG). A Sema domain is found at 15-403 (IEWHKFETSE…MPQMKKILKM (389 aa)).

Belongs to the semaphorin family. Interacts with host VESPR.

It is found in the secreted. Functionally, acts as a semaphorin-like protein and binds to host plexin C1 receptor. May alter the movement of host plexin C1-expressing cells including dendritic cells, monocytes, or granulocytes in the proximity of infected cells. May also regulate host cell cytoskeleton of neighboring cells to improve viral infection. The sequence is that of Semaphorin-like protein A39 from Homo sapiens (Human).